The chain runs to 560 residues: Potassium-transporting ATPase potassium-binding subunit (560 aa).

The next 12 membrane-spanning stretches (helical) occupy residues 11–31, 63–83, 134–154, 179–199, 254–274, 282–302, 329–349, 356–376, 379–399, 417–437, 488–508, and 530–550; these read IFLLLIVIAVPLGKYLYVAFF, SYCTALLIVNAALLGISYGLL, FVTMMMFTSAATGLTVATALI, LLPLSVIVTILLVAFGVPQTF, VIEMLSMWCIPAALPFTYGHA, WVLFATMFVLFVMMLGVVYNA, FGIPLSSLFTAITTAATTGSV, LTPIGGLVPLALMMLNNVFGG, VGFVNIMMYAMIAVFLSGLMV, LIVIALLLHPLIILAPSAIAL, VVMLLGRYVSIIAMLAVAGSL, and VILFGTVFIIGALTFFPVLIL.

It belongs to the KdpA family. The system is composed of three essential subunits: KdpA, KdpB and KdpC.

It localises to the cell membrane. Part of the high-affinity ATP-driven potassium transport (or Kdp) system, which catalyzes the hydrolysis of ATP coupled with the electrogenic transport of potassium into the cytoplasm. This subunit binds the extracellular potassium ions and delivers the ions to the membrane domain of KdpB through an intramembrane tunnel. The chain is Potassium-transporting ATPase potassium-binding subunit from Geobacillus kaustophilus (strain HTA426).